Reading from the N-terminus, the 116-residue chain is Large ribosomal subunit protein bL17 (116 aa).

It belongs to the bacterial ribosomal protein bL17 family. Part of the 50S ribosomal subunit. Contacts protein L32.

This Synechocystis sp. (strain ATCC 27184 / PCC 6803 / Kazusa) protein is Large ribosomal subunit protein bL17.